The primary structure comprises 271 residues: Pyrroline-5-carboxylate reductase (271 aa).

It belongs to the pyrroline-5-carboxylate reductase family.

Its subcellular location is the cytoplasm. The enzyme catalyses L-proline + NADP(+) = (S)-1-pyrroline-5-carboxylate + NADPH + 2 H(+). It carries out the reaction L-proline + NAD(+) = (S)-1-pyrroline-5-carboxylate + NADH + 2 H(+). The protein operates within amino-acid biosynthesis; L-proline biosynthesis; L-proline from L-glutamate 5-semialdehyde: step 1/1. Catalyzes the reduction of 1-pyrroline-5-carboxylate (PCA) to L-proline. The protein is Pyrroline-5-carboxylate reductase of Haemophilus influenzae (strain ATCC 51907 / DSM 11121 / KW20 / Rd).